The primary structure comprises 538 residues: Atos homolog protein B (538 aa).

Disordered regions lie at residues M1–V99, Q165–T185, and K199–G270. A compositionally biased stretch (pro residues) spans H227 to C238. 2 positions are modified to phosphoserine: S254 and S255. The required for macropage invasion stretch occupies residues L348–T430. The interval Q436–V444 is transactivation domain 1 (TAD1).

It belongs to the ATOS family.

It is found in the nucleus. Transcription regulator that syncronizes transcriptional and translational programs to promote macrophage invasion of tissues. This is Atos homolog protein B from Mus musculus (Mouse).